The following is a 126-amino-acid chain: Holo-[acyl-carrier-protein] synthase (126 aa).

Residues aspartate 8 and glutamate 57 each coordinate Mg(2+).

Belongs to the P-Pant transferase superfamily. AcpS family. Mg(2+) serves as cofactor.

It localises to the cytoplasm. It catalyses the reaction apo-[ACP] + CoA = holo-[ACP] + adenosine 3',5'-bisphosphate + H(+). Transfers the 4'-phosphopantetheine moiety from coenzyme A to a Ser of acyl-carrier-protein. This chain is Holo-[acyl-carrier-protein] synthase, found in Vibrio cholerae serotype O1 (strain ATCC 39315 / El Tor Inaba N16961).